The following is a 907-amino-acid chain: NADH-quinone oxidoreductase subunit G (907 aa).

In terms of domain architecture, 2Fe-2S ferredoxin-type spans 1–83 (MTIIFVDNEE…GMIVSTSDKI (83 aa)). [2Fe-2S] cluster is bound by residues Cys-34, Cys-45, Cys-48, and Cys-67. The 40-residue stretch at 83–122 (ISRNFRKGIIELLMLNHPHDCPICEEGGSCHLQDMTVMAG) folds into the 4Fe-4S His(Cys)3-ligated-type domain. His-99, Cys-103, Cys-106, Cys-112, Cys-151, Cys-154, Cys-157, Cys-201, Cys-228, Cys-231, Cys-235, and Cys-263 together coordinate [4Fe-4S] cluster. Positions 221-277 (MQYAPSICQHCCVGCNISVGEKYGKISRIENRYHNAINHYFLCDLGRFSYDYSNVDE) constitute a 4Fe-4S Mo/W bis-MGD-type domain.

It belongs to the complex I 75 kDa subunit family. As to quaternary structure, composed of 13 different subunits. Subunits NuoCD, E, F, and G constitute the peripheral sector of the complex. Requires [2Fe-2S] cluster as cofactor. The cofactor is [4Fe-4S] cluster.

It catalyses the reaction a quinone + NADH + 5 H(+)(in) = a quinol + NAD(+) + 4 H(+)(out). Its function is as follows. NDH-1 shuttles electrons from NADH, via FMN and iron-sulfur (Fe-S) centers, to quinones in the respiratory chain. Couples the redox reaction to proton translocation (for every two electrons transferred, four hydrogen ions are translocated across the cytoplasmic membrane), and thus conserves the redox energy in a proton gradient. In Buchnera aphidicola subsp. Baizongia pistaciae (strain Bp), this protein is NADH-quinone oxidoreductase subunit G (nuoG).